The sequence spans 692 residues: MNTAITATTPTEYSYNDRYINRELSILDFHLRVLEQAVDPLHPLLERMNFLLIFSRNLDEFFEIRVAGVMEQFALGNESRSPDGLTPRQVLQKISETAHTAIERQYRILNEEILPKLREEDICFLRRGELTPAQSAWVKKYFQEQVAPVLTPISLDPAHPFPRLVNKSLNFIVTLEGKDAFGRQIDLAVVPAPRSLPRVVRLPDELTGGKEHHVMLSAIIHEHVSDLFPGMTATGCYQFRVTRNADLALNEDVEDLAKALKGELSSRRFGRAVRLEVTQNCPQHIYEYLLEEFDLNEEQLYKVDGPVNLARLVSNFKRPHLRYDSHTPVVPKVFKKTESIFSAMQKQDILLHHPFESFAPVIQLLREAARDPQVLAIKQTLYRSGADSEIVQVLAEAARNGKEVTAVIELRARFDEESNIEVANVLQEAGAVVVYGIVGYKTHAKMIMVVRRENNKLVRYVHLGTGNYHAMNARIYTDYGLMTTDKDLCEDVHRIFQELTGMGKMAKLKKLLHAPFTLHAQLINFIDEEIANAKAGRKAQIIVKVNALTEVQLINKLYEASQAGVQVDLIIRSICCLRPGLPNLSENIRVRSIVGRFLEHTRVYYFSNNGDARIYCSSADWMDRNLFNRVEACFPIEDPALKKRIYQQGLLNYLQDNQQAWLLQGDGTWIRAKPAEGEKLHNAQRELLETFK.

Position 57 (Asn-57) interacts with ATP. Positions 383 and 413 each coordinate Mg(2+). The Phosphohistidine intermediate role is filled by His-443. ATP-binding residues include Tyr-476, Arg-572, and His-600.

It belongs to the polyphosphate kinase 1 (PPK1) family. Mg(2+) is required as a cofactor. Post-translationally, an intermediate of this reaction is the autophosphorylated ppk in which a phosphate is covalently linked to a histidine residue through a N-P bond.

It catalyses the reaction [phosphate](n) + ATP = [phosphate](n+1) + ADP. Catalyzes the reversible transfer of the terminal phosphate of ATP to form a long-chain polyphosphate (polyP). The polypeptide is Polyphosphate kinase (Acinetobacter baumannii (strain AYE)).